Reading from the N-terminus, the 541-residue chain is Glutamine-dependent NAD(+) synthetase (541 aa).

Residues 4 to 243 (FKIALAQFSP…EELYYSEFDI (240 aa)) form the CN hydrolase domain. E44 acts as the Proton acceptor; for glutaminase activity in catalysis. The active-site For glutaminase activity is the K111. Y117 contributes to the L-glutamine binding site. The Nucleophile; for glutaminase activity role is filled by C147. The L-glutamine site is built by S173 and K179. ATP is bound at residue 286–293 (GLSGGIDS). N369 serves as a coordination point for deamido-NAD(+). An ATP-binding site is contributed by T393. Deamido-NAD(+) contacts are provided by E398 and K510.

In the C-terminal section; belongs to the NAD synthetase family.

It catalyses the reaction deamido-NAD(+) + L-glutamine + ATP + H2O = L-glutamate + AMP + diphosphate + NAD(+) + H(+). The protein operates within cofactor biosynthesis; NAD(+) biosynthesis; NAD(+) from deamido-NAD(+) (L-Gln route): step 1/1. Its function is as follows. Catalyzes the ATP-dependent amidation of deamido-NAD to form NAD. Uses L-glutamine as a nitrogen source. In vitro, can also use ammonia as donor with comparable specific activity, but cannot use nicotinate mononucleotide (NaMN) as substrate. This Acinetobacter baylyi (strain ATCC 33305 / BD413 / ADP1) protein is Glutamine-dependent NAD(+) synthetase.